The primary structure comprises 132 residues: Small ribosomal subunit protein uS8 (132 aa).

Belongs to the universal ribosomal protein uS8 family. In terms of assembly, part of the 30S ribosomal subunit. Contacts proteins S5 and S12.

One of the primary rRNA binding proteins, it binds directly to 16S rRNA central domain where it helps coordinate assembly of the platform of the 30S subunit. In Clostridium acetobutylicum (strain ATCC 824 / DSM 792 / JCM 1419 / IAM 19013 / LMG 5710 / NBRC 13948 / NRRL B-527 / VKM B-1787 / 2291 / W), this protein is Small ribosomal subunit protein uS8.